A 371-amino-acid chain; its full sequence is Outer membrane protein P2 (371 aa).

Positions 1-20 are cleaved as a signal peptide; it reads MKKTLAALIVGAFAASAANA.

The protein belongs to the Gram-negative porin family. Homotrimer.

It is found in the cell outer membrane. Its function is as follows. Forms pores that allow passive diffusion of small molecules across the outer membrane. The polypeptide is Outer membrane protein P2 (ompP2) (Haemophilus influenzae).